Here is a 345-residue protein sequence, read N- to C-terminus: Histidinol-phosphate aminotransferase (345 aa).

Lys206 is subject to N6-(pyridoxal phosphate)lysine.

Belongs to the class-II pyridoxal-phosphate-dependent aminotransferase family. Histidinol-phosphate aminotransferase subfamily. In terms of assembly, homodimer. Pyridoxal 5'-phosphate is required as a cofactor.

It catalyses the reaction L-histidinol phosphate + 2-oxoglutarate = 3-(imidazol-4-yl)-2-oxopropyl phosphate + L-glutamate. It participates in amino-acid biosynthesis; L-histidine biosynthesis; L-histidine from 5-phospho-alpha-D-ribose 1-diphosphate: step 7/9. The polypeptide is Histidinol-phosphate aminotransferase (Bacteroides fragilis (strain ATCC 25285 / DSM 2151 / CCUG 4856 / JCM 11019 / LMG 10263 / NCTC 9343 / Onslow / VPI 2553 / EN-2)).